A 384-amino-acid chain; its full sequence is Prostaglandin E synthase 2 (384 aa).

Residues M1 to R56 lie on the Lumenal side of the membrane. The helical transmembrane segment at L57–H73 threads the bilayer. The Cytoplasmic segment spans residues T74 to D384. One can recognise a Glutaredoxin domain in the interval S89 to K192. Residues V147 and D163–S164 contribute to the glutathione site. Residues Y262–H376 form the GST C-terminal domain.

The protein belongs to the GST superfamily. In terms of assembly, homodimer. Interacts with EXOSC10. May interact with CEBPB. Synthesized as a Golgi membrane-associated protein, and the proteolytic removal of the N-terminal hydrophobic domain leads to the formation of a mature cytosolic enzyme. Widely expressed. Expressed in brain, heart, liver, colon and lung.

The protein localises to the golgi apparatus membrane. It is found in the nucleus. It localises to the cytoplasm. It carries out the reaction prostaglandin H2 = prostaglandin E2. It catalyses the reaction prostaglandin H2 = (12S)-hydroxy-(5Z,8E,10E)-heptadecatrienoate + malonaldehyde. It functions in the pathway lipid metabolism; prostaglandin biosynthesis. With respect to regulation, isomerase activity is increased by sulfhydril compounds. Dithiothreitol (DTT) is most effective, followed by glutathione (GSH) and 2-mercaptoethanol. Isomerase that catalyzes the conversion of PGH2 into the more stable prostaglandin E2 (PGE2) (in vitro). The biological function and the GSH-dependent property of PTGES2 is still under debate. In vivo, PTGES2 could form a complex with GSH and heme and would not participate in PGE2 synthesis but would catalyze the degradation of prostaglandin E2 H2 (PGH2) to 12(S)-hydroxy-5(Z),8(E),10(E)-heptadecatrienoic acid (HHT) and malondialdehyde (MDA). May also have transactivation activity toward IFN-gamma (IFNG), possibly via an interaction with CEBPB; however, the relevance of transcription activation activity remains unclear. The chain is Prostaglandin E synthase 2 (Ptges2) from Mus musculus (Mouse).